The primary structure comprises 342 residues: MANSVLTATYEGYIRDTADALRIFEACLTGSLTHTARRPHDRERSTLITSGNVFVYEEGSSGIKRWTDGVNWSPSRILGNFLVYREMNQPFSPGEKKRASKKPKKQAGVAKAYDHRPQATRFSSMPNDPAGVCAGGDGGAGDEDRDLVGSLTDSYDFKPNSLIKKTISITHNGIPHHLVSYYTVDDVRSGRLVRPSDHEFFGRVQPRMELMSGQNFRVPLEDGGDEESRGVMSHGQQVMPYPCNDYQIFQHAYGNAAAPRTGQFTYGPPQNGTYAPVSVPATHAIQNGTYAPVSVPATPALQNGTYLPVPAPQNGSYYNLHQNVHQNVHQNPAYPWYHAQLQ.

The interval 91–113 is disordered; it reads FSPGEKKRASKKPKKQAGVAKAY.

Belongs to the MIT1/WOR1 family.

The protein localises to the nucleus. In terms of biological role, global transcriptional regulator of pathogenicity. Regulates many genes during growth in putrescine medium and during infection. Involved in the developmental processes of conidium formation and sexual reproduction and modulates a morphological change that accompanies mycotoxin production. The sequence is that of Global transcription regulator FGP1 from Gibberella zeae (strain ATCC MYA-4620 / CBS 123657 / FGSC 9075 / NRRL 31084 / PH-1) (Wheat head blight fungus).